The chain runs to 102 residues: Large ribosomal subunit protein uL24 (102 aa).

Belongs to the universal ribosomal protein uL24 family. Part of the 50S ribosomal subunit.

Its function is as follows. One of two assembly initiator proteins, it binds directly to the 5'-end of the 23S rRNA, where it nucleates assembly of the 50S subunit. One of the proteins that surrounds the polypeptide exit tunnel on the outside of the subunit. The polypeptide is Large ribosomal subunit protein uL24 (Cupriavidus necator (strain ATCC 17699 / DSM 428 / KCTC 22496 / NCIMB 10442 / H16 / Stanier 337) (Ralstonia eutropha)).